Reading from the N-terminus, the 217-residue chain is MQFSSSSRTSDENVDYLFKVILIGDSNVGKTCVVQHFKSGVYSESQQNTIGVDFTVRSLEIDGKKVKMQVWDTAGQERFRTITQSYYRSAHAAIIAYDLTRRSTFESVPHWIHEIEKYGAANLVIMLIGNKSDLWEKRHVLFEDACTLAEKHGLLAVLETSAKESRNIDEVFVLMAKELIARNSLHLYGESAQQGLSQDSSPVLVAQVPNESTRCTC.

GTP contacts are provided by Ser26, Val28, Gly29, Lys30, Thr31, Cys32, Tyr42, Ser43, Glu44, Ser45, and Thr49. Thr31 provides a ligand contact to Mg(2+). The Switch 1 signature appears at 39–54 (SGVYSESQQNTIGVDF). Mg(2+) contacts are provided by Thr49 and Asp72. Residues 74–89 (AGQERFRTITQSYYRS) carry the Switch 2 motif. The GTP site is built by Gly75, Asn130, Lys131, Asp133, Ser161, Ala162, and Lys163. 2 S-geranylgeranyl cysteine lipidation sites follow: Cys215 and Cys217. A Cysteine methyl ester modification is found at Cys217.

This sequence belongs to the small GTPase superfamily. Rab family. Mg(2+) is required as a cofactor. As to expression, expressed in a tissue-specific manner. Detected at high levels in intestine, lung and spleen, and at a lower level in kidney.

It localises to the cell membrane. It carries out the reaction GTP + H2O = GDP + phosphate + H(+). With respect to regulation, regulated by guanine nucleotide exchange factors (GEFs) which promote the exchange of bound GDP for free GTP. Regulated by GTPase activating proteins (GAPs) which increase the GTP hydrolysis activity. Inhibited by GDP dissociation inhibitors (GDIs). Its function is as follows. The small GTPases Rab are key regulators of intracellular membrane trafficking, from the formation of transport vesicles to their fusion with membranes. Rabs cycle between an inactive GDP-bound form and an active GTP-bound form that is able to recruit to membranes different set of downstream effectors directly responsible for vesicle formation, movement, tethering and fusion. This is Ras-related protein Rab-19 from Mus musculus (Mouse).